A 390-amino-acid chain; its full sequence is Digeranylgeranylglycerophospholipid reductase (390 aa).

Positions 18, 37, 48, 49, 51, 98, 122, 278, 290, and 291 each coordinate FAD. Valine 368 serves as a coordination point for a 2,3-bis-O-(geranylgeranyl)-sn-glycerol 1-phospholipid.

It belongs to the geranylgeranyl reductase family. DGGGPL reductase subfamily. The cofactor is FAD.

The catalysed reaction is a 2,3-bis-O-phytanyl-sn-glycerol 1-phospholipid + 8 A = a 2,3-bis-O-(geranylgeranyl)-sn-glycerol 1-phospholipid + 8 AH2. It carries out the reaction 2,3-bis-O-(phytanyl)-sn-glycerol 1-phosphate + 8 A = 2,3-bis-O-(geranylgeranyl)-sn-glycerol 1-phosphate + 8 AH2. The enzyme catalyses CDP-2,3-bis-O-(geranylgeranyl)-sn-glycerol + 8 AH2 = CDP-2,3-bis-O-(phytanyl)-sn-glycerol + 8 A. It catalyses the reaction archaetidylserine + 8 AH2 = 2,3-bis-O-phytanyl-sn-glycero-3-phospho-L-serine + 8 A. The protein operates within membrane lipid metabolism; glycerophospholipid metabolism. Functionally, is involved in the reduction of 2,3-digeranylgeranylglycerophospholipids (unsaturated archaeols) into 2,3-diphytanylglycerophospholipids (saturated archaeols) in the biosynthesis of archaeal membrane lipids. Catalyzes the formation of archaetidic acid (2,3-di-O-phytanyl-sn-glyceryl phosphate) from 2,3-di-O-geranylgeranylglyceryl phosphate (DGGGP) via the hydrogenation of each double bond of the isoprenoid chains. Is also probably able to reduce double bonds of geranyl groups in CDP-2,3-bis-O-(geranylgeranyl)-sn-glycerol and archaetidylserine, thus acting at various stages in the biosynthesis of archaeal membrane lipids. In Methanococcus maripaludis (strain C7 / ATCC BAA-1331), this protein is Digeranylgeranylglycerophospholipid reductase.